A 431-amino-acid chain; its full sequence is Transcription factor Sp7 (431 aa).

Residues 30–56 (SSPLRDSTTLGKAGTKKPYSVGSDLSA) form a disordered region. N6-propionyllysine occurs at positions 41 and 45. Residue lysine 58 forms a Glycyl lysine isopeptide (Lys-Gly) (interchain with G-Cter in ubiquitin) linkage. Disordered stretches follow at residues 71–115 (TNGL…VPKG) and 154–260 (TPTP…SGGY). The short motif at 156 to 164 (TPWWDMHPG) is the 9aaTAD element. Over residues 166-178 (NWLGGGQGQGDGL) the composition is skewed to gly residues. Residue lysine 230 forms a Glycyl lysine isopeptide (Lys-Gly) (interchain with G-Cter in ubiquitin) linkage. 3 C2H2-type zinc fingers span residues 294 to 318 (HSCHIPGCGKVYGKASHLKAHLRWH), 324 to 348 (FVCNWLFCGKRFTRSDELERHVRTH), and 354 to 376 (FTCLLCSKRFTRSDHLSKHQRTH). N6-propionyllysine occurs at positions 361 and 371. A disordered region spans residues 367–431 (DHLSKHQRTH…SPEQSNLLEI (65 aa)). Over residues 403–412 (SQTPRPSASP) the composition is skewed to polar residues.

Belongs to the Sp1 C2H2-type zinc-finger protein family. Interacts with RIOX1; the interaction is direct and inhibits transcription activator activity. Ubiquitination at leads to proteasomal degradation. SP7 is a short-live protein with an endogenous half-life of approximately 12 hours. Post-translationally, propionylated. Depropionylation at Lys-371 by SIRT7 activates transcription factor activity and positively regulates bone formation by osteoblasts. As to expression, restricted to bone-derived cell.

The protein resides in the nucleus. Its function is as follows. Transcriptional activator essential for osteoblast differentiation. Binds to SP1 and EKLF consensus sequences and to other G/C-rich sequences. In Homo sapiens (Human), this protein is Transcription factor Sp7 (SP7).